Here is a 524-residue protein sequence, read N- to C-terminus: Tissue-resident T-cell transcription regulator protein ZNF683 (524 aa).

Over residues 130–142 (NKDKLGKQPERAG) the composition is skewed to basic and acidic residues. Disordered regions lie at residues 130–166 (NKDK…NRKS) and 265–303 (QALP…LSSQ). 2 consecutive C2H2-type zinc fingers follow at residues 322–344 (YECN…LRVH) and 350–372 (FQCA…HLVH). The segment at 398–420 (REREVCHKRFSSSSNLKTHLRLH) adopts a C2H2-type 3; degenerate zinc-finger fold. Residues 426–448 (FQCSVCRSRFTQHIHLKLHHRLH) form a C2H2-type 4 zinc finger.

This sequence belongs to the krueppel C2H2-type zinc-finger protein family. Expressed in terminally differentiated effector CD8(+) T-cells, but not in naive and central memory cells. Expressed in terminally differentiated natural killer (NK) cells and natural killer (NKT) T-cells (at protein level). Expressed strongly in effector-type CD8(+) T-cells and weakly in naive and memory CD8(+) T-cells. Expressed in terminally differentiated natural killer (NK) cells. Isoform 2 is strongly expressed in effector CD8(+) T and natural killer (NK) cells. Isoform 1 is expressed in effector CD8(+) T and natural killer (NK) cells. As to expression, (Microbial infection) Expressed in cytomegalovirus (CMV)-infected effector CD8(+) T-cells (at protein level).

Its subcellular location is the nucleus. Functionally, transcription factor that mediates a transcriptional program in various innate and adaptive immune tissue-resident lymphocyte T-cell types such as tissue-resident memory T (Trm), natural killer (trNK) and natural killer T (NKT) cells and negatively regulates gene expression of proteins that promote the egress of tissue-resident T-cell populations from non-lymphoid organs. Plays a role in the development, retention and long-term establishment of adaptive and innate tissue-resident lymphocyte T cell types in non-lymphoid organs, such as the skin and gut, but also in other nonbarrier tissues like liver and kidney, and therefore may provide immediate immunological protection against reactivating infections or viral reinfection. Also plays a role in the differentiation of both thymic and peripheral NKT cells. Negatively regulates the accumulation of interferon-gamma (IFN-gamma) in NKT cells at steady state or after antigenic stimulation. Positively regulates granzyme B production in NKT cells after innate stimulation. Associates with the transcriptional repressor PRDM1/BLIMP1 to chromatin at gene promoter regions. Its function is as follows. Lacks transcriptional repressor activity. Binds to DNA within promoter regions of the transcriptional repressor PRDM1/BLIMP1 target sites. Unable to regulate interferon-gamma (IFN-gamma) production in cytomegalovirus (CMV)-infected effector CD8(+) T-cells. Transcriptional repressor that binds to DNA within promoter regions of the transcriptional repressor PRDM1/BLIMP1 target sites. Regulates interferon-gamma (IFN-gamma) production in cytomegalovirus (CMV)-infected effector CD8(+) T cells. In Homo sapiens (Human), this protein is Tissue-resident T-cell transcription regulator protein ZNF683.